The sequence spans 1065 residues: MSGNSANYDVGYPIYGAKFINEGTLLVAGGGGQFNSSFPNKITALKVNFQKKKHIRRFREITLDSIDDAPTSLDCNNNLILVGCNELFNDSSMENVNHHLRKFVFEQEHLKFVASIDFNRTTDPSVFTKFVYINQRATVAAIASSEVPTVIRIIDPRNLTENYEIETGREVNDLHFAPNGILLSYITSNSLEVASVRDGNFVARKTDFDKNLVLSNIRFLNDNTLLVAASLSNSDGVSLLKLGVSSKGVKILKTASFMFDLNGITSMDVSPNKKFVALSSNDNLVAIVSVEKLKLVQLVPRVHESTITKVTFSPDSRYLASTSMGNTINVLKLSGTSSSILRNIWKFFLNFVLLVVLAGAIQLGYKHNVHGFIYKHAHDIYKSKFKENTTIDQGSSSYFTINDDYRGITESADIISATDVASDIETEFSSFDTSTMRTTTEDEQKFVWISSSADSQFTSADIPTSASSSSSSSSSSFYEESVTNEPIVSSPTSEITKPLASPTEPNIVEKPSLPLNSESIDLLSSSSNSITEYPEPTPDLEEKLSSLIVEQSESEITTDRESVSKLLSTESPSLSHMPSSSSSSLSLSSSLTTSPTTALSTSTATAVTTTQTNPTNDAANTSFLDNSKPASTREIYKTKIITEVITKIEYRNIPASDSNAEAEQYVTTSSSMLLTPTDTMVSSPVSEIDPIASELERMVETPTHSISIASEFDSVASNLIPNEEILSTSASQDSISSHPSTFSDSSITSGFQSIEVSTVTSSVLASESIPSISDSTFSKFHSISEPVSSAIVETATSSFSKTETKTSRVIAFSTEDSERSSALIDNSEYTSVLADNLEPTSVLADNSEPTSVLADSSEPTSVFTDAVQSPKTSVGQSSLSESTNIEGTSMASMIFSSSGASIGALSDIGKGTLSVESASSTVAQPMPGVTTTAPSFVSSPHKISASSIDASGFVQKEIMIEVQSSKDSSEAFGVRHKISENVNTPVSRMLTTEMQASGTVDVTEDVSLSSEVISALNVEITSLPNPVAPPQTIAAPLNNNSNTNIVNDDNAVAGTVNYAGLHDEL.

The Cytoplasmic segment spans residues 1 to 346 (MSGNSANYDV…SSSILRNIWK (346 aa)). The residue at position 65 (serine 65) is a Phosphoserine. WD repeat units follow at residues 259-298 (FDLNGITSMDVSPNKKFVALSSNDNLVAIVSVEKLKLVQL) and 302-341 (VHESTITKVTFSPDSRYLASTSMGNTINVLKLSGTSSSIL). A helical; Signal-anchor for type II membrane protein transmembrane segment spans residues 347-365 (FFLNFVLLVVLAGAIQLGY). The Lumenal portion of the chain corresponds to 366 to 1065 (KHNVHGFIYK…VNYAGLHDEL (700 aa)). The N-linked (GlcNAc...) asparagine glycan is linked to asparagine 388. Disordered regions lie at residues 458–477 (TSADIPTSASSSSSSSSSSF), 482–520 (VTNEPIVSSPTSEITKPLASPTEPNIVEKPSLPLNSESI), and 551–625 (QSES…SFLD). Residues 465–476 (SASSSSSSSSSS) show a composition bias toward low complexity. A compositionally biased stretch (polar residues) spans 482–495 (VTNEPIVSSPTSEI). Residues 568-621 (STESPSLSHMPSSSSSSLSLSSSLTTSPTTALSTSTATAVTTTQTNPTNDAANT) are compositionally biased toward low complexity. An N-linked (GlcNAc...) asparagine glycan is attached at asparagine 620. 4 repeat units span residues 824 to 833 (IDNSEYTSVL), 834 to 843 (ADNLEPTSVL), 844 to 853 (ADNSEPTSVL), and 854 to 863 (ADSSEPTSVF). A 4 X 10 AA tandem repeats region spans residues 824 to 863 (IDNSEYTSVLADNLEPTSVLADNSEPTSVLADSSEPTSVF). Asparagine 1039 carries N-linked (GlcNAc...) asparagine glycosylation. A Prevents secretion from ER motif is present at residues 1062 to 1065 (HDEL).

This sequence belongs to the WD repeat SEC12 family.

The protein localises to the endoplasmic reticulum membrane. Its subcellular location is the golgi apparatus membrane. Its function is as follows. Putative guanine nucleotide-exchange factor (GEF) involved in the formation or budding of transport vesicles from the ER. Positive regulator of SAR1 probably through inhibition of the GTPase activation by SEC23. The polypeptide is Putative guanine nucleotide-exchange factor SED4 (SED4) (Saccharomyces cerevisiae (strain ATCC 204508 / S288c) (Baker's yeast)).